Reading from the N-terminus, the 275-residue chain is Cis-2,3-dihydrobiphenyl-2,3-diol dehydrogenase (275 aa).

9-33 contributes to the NAD(+) binding site; it reads LITGGASGLGRALVDRFVAEAKVAV. Residue Ser140 participates in substrate binding. Tyr153 functions as the Proton acceptor in the catalytic mechanism.

This sequence belongs to the short-chain dehydrogenases/reductases (SDR) family.

It catalyses the reaction (2R,3S)-3-phenylcyclohexa-3,5-diene-1,2-diol + NAD(+) = biphenyl-2,3-diol + NADH + H(+). It functions in the pathway xenobiotic degradation; biphenyl degradation; 2-hydroxy-2,4-pentadienoate and benzoate from biphenyl: step 2/4. The polypeptide is Cis-2,3-dihydrobiphenyl-2,3-diol dehydrogenase (bphB) (Metapseudomonas furukawaii (Pseudomonas furukawaii)).